We begin with the raw amino-acid sequence, 605 residues long: Probable potassium transport system protein Kup 3 (605 aa).

12 helical membrane passes run 16–36 (ALGL…TVIF), 49–69 (ILSL…AWLA), 97–117 (VAFA…DAVI), 138–158 (GLST…LFSV), 170–190 (FGPI…VSAF), 212–232 (GLAG…GEAL), 247–267 (AWHF…VFAI), 287–307 (LYIP…QAII), 339–359 (IYLG…MLVF), 368–388 (AYGM…IIVF), 397–417 (ALVA…TFSK), and 418–438 (LPHG…TIII).

Belongs to the HAK/KUP transporter (TC 2.A.72) family.

It localises to the cell inner membrane. It carries out the reaction K(+)(in) + H(+)(in) = K(+)(out) + H(+)(out). Transport of potassium into the cell. Likely operates as a K(+):H(+) symporter. The polypeptide is Probable potassium transport system protein Kup 3 (Geobacter sulfurreducens (strain ATCC 51573 / DSM 12127 / PCA)).